A 43-amino-acid chain; its full sequence is Protein PsbN (43 aa).

The helical transmembrane segment at 5-27 (TLVAISISGSLVSFTGYALYTAF) threads the bilayer.

Belongs to the PsbN family.

It localises to the plastid. Its subcellular location is the chloroplast thylakoid membrane. Its function is as follows. May play a role in photosystem I and II biogenesis. The polypeptide is Protein PsbN (Drimys granadensis).